Here is a 375-residue protein sequence, read N- to C-terminus: Alcohol dehydrogenase 4, mitochondrial (375 aa).

The N-terminal 27 residues, 1–27 (MFRLARAQTALANKASVSRSFLRLNSS), are a transit peptide targeting the mitochondrion. The Zn(2+) site is built by Cys71, His94, Cys125, Cys128, Cys131, Cys139, and Cys181. Residues 205-211 (GAAGGLG), Asp229, Lys234, 296-298 (VGL), and Arg368 each bind NAD(+).

This sequence belongs to the zinc-containing alcohol dehydrogenase family. In terms of assembly, homotetramer. It depends on Zn(2+) as a cofactor.

The protein resides in the mitochondrion matrix. The enzyme catalyses a primary alcohol + NAD(+) = an aldehyde + NADH + H(+). It catalyses the reaction a secondary alcohol + NAD(+) = a ketone + NADH + H(+). In Kluyveromyces lactis (strain ATCC 8585 / CBS 2359 / DSM 70799 / NBRC 1267 / NRRL Y-1140 / WM37) (Yeast), this protein is Alcohol dehydrogenase 4, mitochondrial (ADH4).